Reading from the N-terminus, the 242-residue chain is Pyridoxine 5'-phosphate synthase (242 aa).

3-amino-2-oxopropyl phosphate is bound at residue Asn8. 10-11 (DH) contacts 1-deoxy-D-xylulose 5-phosphate. Arg19 is a binding site for 3-amino-2-oxopropyl phosphate. Residue His44 is the Proton acceptor of the active site. 2 residues coordinate 1-deoxy-D-xylulose 5-phosphate: Arg46 and His51. Catalysis depends on Glu71, which acts as the Proton acceptor. Position 101 (Thr101) interacts with 1-deoxy-D-xylulose 5-phosphate. His193 (proton donor) is an active-site residue. 3-amino-2-oxopropyl phosphate contacts are provided by residues Gly194 and 215 to 216 (GF).

This sequence belongs to the PNP synthase family. Homooctamer; tetramer of dimers.

Its subcellular location is the cytoplasm. It carries out the reaction 3-amino-2-oxopropyl phosphate + 1-deoxy-D-xylulose 5-phosphate = pyridoxine 5'-phosphate + phosphate + 2 H2O + H(+). The protein operates within cofactor biosynthesis; pyridoxine 5'-phosphate biosynthesis; pyridoxine 5'-phosphate from D-erythrose 4-phosphate: step 5/5. Its function is as follows. Catalyzes the complicated ring closure reaction between the two acyclic compounds 1-deoxy-D-xylulose-5-phosphate (DXP) and 3-amino-2-oxopropyl phosphate (1-amino-acetone-3-phosphate or AAP) to form pyridoxine 5'-phosphate (PNP) and inorganic phosphate. In Elusimicrobium minutum (strain Pei191), this protein is Pyridoxine 5'-phosphate synthase.